The chain runs to 266 residues: Putative tyrosine phosphatase 197R (266 aa).

Residues 15–167 form the Tyrosine-protein phosphatase domain; it reads RPTLGSLSDK…LFGSQNINND (153 aa). C111 serves as the catalytic Phosphocysteine intermediate.

Belongs to the protein-tyrosine phosphatase family.

It carries out the reaction O-phospho-L-tyrosyl-[protein] + H2O = L-tyrosyl-[protein] + phosphate. In Invertebrate iridescent virus 6 (IIV-6), this protein is Putative tyrosine phosphatase 197R.